We begin with the raw amino-acid sequence, 413 residues long: Tyrosine--tRNA ligase (413 aa).

Y34 lines the L-tyrosine pocket. The 'HIGH' region signature appears at 39-48 (PTSHSLTVGH). L-tyrosine is bound by residues Y164 and Q168. A 'KMSKS' region motif is present at residues 225–229 (KFGKS). K228 lines the ATP pocket. The 67-residue stretch at 347–413 (ILLVDALVQT…GKKNNALIVF (67 aa)) folds into the S4 RNA-binding domain.

This sequence belongs to the class-I aminoacyl-tRNA synthetase family. TyrS type 1 subfamily. In terms of assembly, homodimer.

It localises to the cytoplasm. It carries out the reaction tRNA(Tyr) + L-tyrosine + ATP = L-tyrosyl-tRNA(Tyr) + AMP + diphosphate + H(+). In terms of biological role, catalyzes the attachment of tyrosine to tRNA(Tyr) in a two-step reaction: tyrosine is first activated by ATP to form Tyr-AMP and then transferred to the acceptor end of tRNA(Tyr). This chain is Tyrosine--tRNA ligase, found in Onion yellows phytoplasma (strain OY-M).